The following is a 300-amino-acid chain: 4-hydroxy-tetrahydrodipicolinate synthase (300 aa).

Position 45 (threonine 45) interacts with pyruvate. Tyrosine 140 serves as the catalytic Proton donor/acceptor. Lysine 169 functions as the Schiff-base intermediate with substrate in the catalytic mechanism. Position 210 (isoleucine 210) interacts with pyruvate.

This sequence belongs to the DapA family. As to quaternary structure, homotetramer; dimer of dimers.

The protein localises to the cytoplasm. It carries out the reaction L-aspartate 4-semialdehyde + pyruvate = (2S,4S)-4-hydroxy-2,3,4,5-tetrahydrodipicolinate + H2O + H(+). It functions in the pathway amino-acid biosynthesis; L-lysine biosynthesis via DAP pathway; (S)-tetrahydrodipicolinate from L-aspartate: step 3/4. In terms of biological role, catalyzes the condensation of (S)-aspartate-beta-semialdehyde [(S)-ASA] and pyruvate to 4-hydroxy-tetrahydrodipicolinate (HTPA). This chain is 4-hydroxy-tetrahydrodipicolinate synthase, found in Helicobacter pylori (strain P12).